The sequence spans 127 residues: Fumarate reductase subunit C (127 aa).

Transmembrane regions (helical) follow at residues 30–50, 58–78, and 107–127; these read ATVL…GCLV, GWLA…ALLG, and IIVL…LIVV.

The protein belongs to the FrdC family. In terms of assembly, part of an enzyme complex containing four subunits: a flavoprotein (FrdA), an iron-sulfur protein (FrdB), and two hydrophobic anchor proteins (FrdC and FrdD).

It is found in the cell inner membrane. Its function is as follows. Anchors the catalytic components of the fumarate reductase complex to the cell membrane, binds quinones. This Vibrio parahaemolyticus serotype O3:K6 (strain RIMD 2210633) protein is Fumarate reductase subunit C.